A 246-amino-acid chain; its full sequence is N-alpha-acetyltransferase 11 (246 aa).

The segment at 1 to 58 is interaction with NAA15; that stretch reads MNIRNARPEDLMNMQHCNLLCLPENYQMKYYFYHGLSWPQLSYIAEDEDGKIVGYVLA. The N-acetyltransferase domain occupies 1–152; that stretch reads MNIRNARPED…DAYAMKRDLA (152 aa). Residues 175-246 are disordered; it reads EENQEAQDST…DSSEYLDSTS (72 aa). Positions 230 to 246 are enriched in polar residues; that stretch reads SHSTDVQDSSEYLDSTS.

Belongs to the acetyltransferase family. ARD1 subfamily. As to quaternary structure, component of the N-terminal acetyltransferase A (NatA) complex composed of NAA11 and NAA15. Interacts with HIF1A.

The protein resides in the cytoplasm. Its subcellular location is the nucleus. It carries out the reaction N-terminal glycyl-[protein] + acetyl-CoA = N-terminal N(alpha)-acetylglycyl-[protein] + CoA + H(+). The enzyme catalyses N-terminal L-alanyl-[protein] + acetyl-CoA = N-terminal N(alpha)-acetyl-L-alanyl-[protein] + CoA + H(+). It catalyses the reaction N-terminal L-seryl-[protein] + acetyl-CoA = N-terminal N(alpha)-acetyl-L-seryl-[protein] + CoA + H(+). The catalysed reaction is N-terminal L-valyl-[protein] + acetyl-CoA = N-terminal N(alpha)-acetyl-L-valyl-[protein] + CoA + H(+). It carries out the reaction N-terminal L-cysteinyl-[protein] + acetyl-CoA = N-terminal N(alpha)-acetyl-L-cysteinyl-[protein] + CoA + H(+). The enzyme catalyses N-terminal L-threonyl-[protein] + acetyl-CoA = N-terminal N(alpha)-acetyl-L-threonyl-[protein] + CoA + H(+). Displays alpha (N-terminal) acetyltransferase activity. Proposed alternative catalytic subunit of the N-terminal acetyltransferase A (NatA) complex. The chain is N-alpha-acetyltransferase 11 (Naa11) from Rattus norvegicus (Rat).